The following is a 324-amino-acid chain: Olfactory receptor 52N5 (324 aa).

Over 1 to 33 the chain is Extracellular; sequence MPLFNSLCWFPTIHVTPPSFILNGIPGLERVHV. Residues 34–54 traverse the membrane as a helical segment; sequence WISLPLCTMYIIFLVGNLGLV. Topologically, residues 55-62 are cytoplasmic; the sequence is YLIYYEES. Residues 63–84 traverse the membrane as a helical segment; the sequence is LHHPMYFFFGHALSLIDLLTCT. Topologically, residues 85–108 are extracellular; sequence TTLPNALCIFWFSLKEINFNACLA. Cysteine 106 and cysteine 198 are joined by a disulfide. The helical transmembrane segment at 109 to 129 threads the bilayer; sequence QMFFVHGFTGVESGVLMLMAL. Topologically, residues 130-148 are cytoplasmic; sequence DRYVAICYPLRYATTLTNP. The helical transmembrane segment at 149 to 169 threads the bilayer; that stretch reads IIAKAELATFLRGVLLMIPFP. Residues 170-205 lie on the Extracellular side of the membrane; the sequence is FLVKRLPFCQSNIISHTYCDHMSVVKLSCASIKVNV. A helical transmembrane segment spans residues 206 to 226; that stretch reads IYGLMVALLIGVFDICCISLS. The Cytoplasmic segment spans residues 227–246; sequence YTLILKAAISLSSSDARQKA. The helical transmembrane segment at 247–267 threads the bilayer; that stretch reads FSTCTAHISAIIITYVPAFFT. Residues 268–283 lie on the Extracellular side of the membrane; that stretch reads FFAHRFGGHTIPPSLH. Residues 284-304 traverse the membrane as a helical segment; the sequence is IIVANLYLLLPPTLNPIVYGV. Residues 305–324 lie on the Cytoplasmic side of the membrane; sequence KTKQIRKSVIKFFQGDKGAG.

It belongs to the G-protein coupled receptor 1 family.

It is found in the cell membrane. Its function is as follows. Odorant receptor. This Homo sapiens (Human) protein is Olfactory receptor 52N5 (OR52N5).